We begin with the raw amino-acid sequence, 214 residues long: Holliday junction branch migration complex subunit RuvA (214 aa).

The domain I stretch occupies residues 1–68; that stretch reads MIGFLQGKVL…QPKPVLIGFD (68 aa). The tract at residues 69–146 is domain II; it reads SAEEKDFFQL…RFLLAADEAG (78 aa). The segment at 147–160 is flexible linker; it reads AGDGVSKTGTPSLP. Residues 161–214 are domain III; the sequence is IQKAIDQVVDVLVQQLGHTPSAAKMMVAQALDRDPEIMTPEALFDEVYKGDVDA.

The protein belongs to the RuvA family. In terms of assembly, homotetramer. Forms an RuvA(8)-RuvB(12)-Holliday junction (HJ) complex. HJ DNA is sandwiched between 2 RuvA tetramers; dsDNA enters through RuvA and exits via RuvB. An RuvB hexamer assembles on each DNA strand where it exits the tetramer. Each RuvB hexamer is contacted by two RuvA subunits (via domain III) on 2 adjacent RuvB subunits; this complex drives branch migration. In the full resolvosome a probable DNA-RuvA(4)-RuvB(12)-RuvC(2) complex forms which resolves the HJ.

The protein resides in the cytoplasm. In terms of biological role, the RuvA-RuvB-RuvC complex processes Holliday junction (HJ) DNA during genetic recombination and DNA repair, while the RuvA-RuvB complex plays an important role in the rescue of blocked DNA replication forks via replication fork reversal (RFR). RuvA specifically binds to HJ cruciform DNA, conferring on it an open structure. The RuvB hexamer acts as an ATP-dependent pump, pulling dsDNA into and through the RuvAB complex. HJ branch migration allows RuvC to scan DNA until it finds its consensus sequence, where it cleaves and resolves the cruciform DNA. The protein is Holliday junction branch migration complex subunit RuvA of Desulforapulum autotrophicum (strain ATCC 43914 / DSM 3382 / VKM B-1955 / HRM2) (Desulfobacterium autotrophicum).